Here is a 246-residue protein sequence, read N- to C-terminus: U2 small nuclear ribonucleoprotein A' (246 aa).

LRR repeat units follow at residues 19–40 (RDRE…GVTR), 42–63 (QNDA…PLLQ), 64–85 (QLKT…IGHS), and 88–109 (ALHS…VHLS). The LRRCT domain occupies 122–160 (TPASREAQYREFVIWKLPQVRVLDYQRIKDKERARAKDL).

Belongs to the U2 small nuclear ribonucleoprotein A family. In terms of assembly, associated with the spliceosome.

The protein resides in the nucleus. Involved in pre-mRNA splicing. The protein is U2 small nuclear ribonucleoprotein A' (LEA1) of Mycosarcoma maydis (Corn smut fungus).